Here is a 292-residue protein sequence, read N- to C-terminus: 2-(5''-triphosphoribosyl)-3'-dephosphocoenzyme-A synthase (292 aa).

The protein belongs to the CitG/MdcB family.

It carries out the reaction 3'-dephospho-CoA + ATP = 2'-(5''-triphospho-alpha-D-ribosyl)-3'-dephospho-CoA + adenine. Catalyzes the formation of 2-(5''-triphosphoribosyl)-3'-dephosphocoenzyme-A, the precursor of the prosthetic group of the holo-acyl carrier protein (gamma chain) of citrate lyase, from ATP and dephospho-CoA. The protein is 2-(5''-triphosphoribosyl)-3'-dephosphocoenzyme-A synthase of Escherichia coli O7:K1 (strain IAI39 / ExPEC).